Reading from the N-terminus, the 173-residue chain is RNA pyrophosphohydrolase (173 aa).

Residues 13 to 166 (PYRPCVGLMI…KRKVYEEVVA (154 aa)) form the Nudix hydrolase domain. The Nudix box signature appears at 54–75 (GGIDKGEEPLQAAERELYEETG).

This sequence belongs to the Nudix hydrolase family. RppH subfamily. A divalent metal cation is required as a cofactor.

Functionally, accelerates the degradation of transcripts by removing pyrophosphate from the 5'-end of triphosphorylated RNA, leading to a more labile monophosphorylated state that can stimulate subsequent ribonuclease cleavage. The chain is RNA pyrophosphohydrolase from Mesorhizobium japonicum (strain LMG 29417 / CECT 9101 / MAFF 303099) (Mesorhizobium loti (strain MAFF 303099)).